Here is an 81-residue protein sequence, read N- to C-terminus: Protein Vpu (81 aa).

Residues 1-7 (MQSLEIV) lie on the Extracellular side of the membrane. A helical transmembrane segment spans residues 8–28 (AIVELVVAAIIAIVVWTIVFI). Topologically, residues 29–81 (EYRKILRQRKIDRLIDRIREREEDNGNESEGDQEELSALVEMGHHAPWNVDDL) are cytoplasmic. The segment at 50-81 (EEDNGNESEGDQEELSALVEMGHHAPWNVDDL) is disordered. Residues 53–63 (NGNESEGDQEE) are compositionally biased toward acidic residues. Residue Ser57 is modified to Phosphoserine; by host CK2.

This sequence belongs to the HIV-1 VPU protein family. In terms of assembly, homopentamer. Interacts with host CD4 and BRTC; these interactions induce proteasomal degradation of CD4. Interacts with host BST2; this interaction leads to the degradation of host BST2. Interacts with host FBXW11. Interacts with host AP1M1; this interaction plays a role in the mistrafficking and subsequent degradation of host BST2. Interacts with host RANBP2; this interaction allows Vpu to down-regulate host BLM sumoylation. Phosphorylated by host CK2. This phosphorylation is necessary for interaction with human BTRC and degradation of CD4.

It localises to the host membrane. Ion channel activity is inhibited by hexamethylene amiloride in vitro. Its function is as follows. Enhances virion budding by targeting host CD4 and Tetherin/BST2 to proteasome degradation. Degradation of CD4 prevents any unwanted premature interactions between viral Env and its host receptor CD4 in the endoplasmic reticulum. Degradation of antiretroviral protein Tetherin/BST2 is important for virion budding, as BST2 tethers new viral particles to the host cell membrane. Mechanistically, Vpu bridges either CD4 or BST2 to BTRC, a substrate recognition subunit of the Skp1/Cullin/F-box protein E3 ubiquitin ligase, induces their ubiquitination and subsequent proteasomal degradation. The alteration of the E3 ligase specificity by Vpu seems to promote the degradation of host IKBKB, leading to NF-kappa-B down-regulation and subsequent apoptosis. Acts as a viroporin that forms an oligomeric ion channel in membranes. Modulates the host DNA repair mechanisms to promote degradation of nuclear viral cDNA in cells that are already productively infected in order to suppress immune sensing and proviral hyper-integration (superinfection). Manipulates PML-NBs and modulates SUMOylation of host BLM protein thereby enhancing its DNA-end processing activity toward viral unintegrated linear DNA. Also inhibits RAD52-mediated homologous repair of viral cDNA, preventing the generation of dead-end circular forms of single copies of the long terminal repeat and permitting sustained nucleolytic attack. This is Protein Vpu from Homo sapiens (Human).